Consider the following 517-residue polypeptide: L-amino-acid oxidase (517 aa).

An N-terminal signal peptide occupies residues 1–19 (MNVFSIFSLVFLAAFGSCA). A disulfide bridge connects residues C29 and C192. Residues 62-63 (MA), 82-83 (EA), R90, and 106-109 (GPMR) contribute to the FAD site. R109 lines the substrate pocket. N191 is a glycosylation site (N-linked (GlcNAc...) asparagine). V280 is an FAD binding site. A disulfide bridge links C350 with C431. N380 carries an N-linked (GlcNAc...) asparagine glycan. Y391 serves as a coordination point for substrate. Residues E476 and 483–488 (GWLDST) each bind FAD. Residue 483–484 (GW) coordinates substrate.

The protein belongs to the flavin monoamine oxidase family. FIG1 subfamily. In terms of assembly, monomer. This is in contrast with most of its orthologs, that are non-covalently linked homodimers. It depends on FAD as a cofactor. N-glycosylated. As to expression, expressed by the venom gland.

It is found in the secreted. It catalyses the reaction an L-alpha-amino acid + O2 + H2O = a 2-oxocarboxylate + H2O2 + NH4(+). The catalysed reaction is L-leucine + O2 + H2O = 4-methyl-2-oxopentanoate + H2O2 + NH4(+). It carries out the reaction L-phenylalanine + O2 + H2O = 3-phenylpyruvate + H2O2 + NH4(+). The enzyme catalyses L-tryptophan + O2 + H2O = indole-3-pyruvate + H2O2 + NH4(+). It catalyses the reaction L-methionine + O2 + H2O = 4-methylsulfanyl-2-oxobutanoate + H2O2 + NH4(+). The catalysed reaction is L-isoleucine + O2 + H2O = (S)-3-methyl-2-oxopentanoate + H2O2 + NH4(+). It carries out the reaction L-arginine + O2 + H2O = 5-guanidino-2-oxopentanoate + H2O2 + NH4(+). The enzyme catalyses L-aspartate + O2 + H2O = oxaloacetate + H2O2 + NH4(+). It catalyses the reaction L-histidine + O2 + H2O = 3-(imidazol-5-yl)pyruvate + H2O2 + NH4(+). The catalysed reaction is L-asparagine + O2 + H2O = 2-oxosuccinamate + H2O2 + NH4(+). It carries out the reaction L-tyrosine + O2 + H2O = 3-(4-hydroxyphenyl)pyruvate + H2O2 + NH4(+). The enzyme catalyses L-glutamine + O2 + H2O = 2-oxoglutaramate + H2O2 + NH4(+). It catalyses the reaction L-alanine + O2 + H2O = pyruvate + H2O2 + NH4(+). The catalysed reaction is L-lysine + O2 + H2O = 6-amino-2-oxohexanoate + H2O2 + NH4(+). It carries out the reaction L-glutamate + O2 + H2O = H2O2 + 2-oxoglutarate + NH4(+). Its function is as follows. Catalyzes an oxidative deamination of predominantly hydrophobic and aromatic L-amino acids, thus producing hydrogen peroxide that may contribute to the diverse toxic effects of this enzyme. Is highly active against L-Tyr, L-Asp, L-Phe, L-Glu, L-Trp, L-His, L-Gln, L-Ile, L-Met, L-Leu and moderately active against L-Lys, L-Arg, L-Ala and L-Asn. Exhibits diverse biological activities, such as edema, inflammatory cell infiltration, cytotoxicity and apoptosis, as well as induction of platelet aggregation. Effects of snake L-amino oxidases on platelets are controversial, since they either induce aggregation or inhibit agonist-induced aggregation. These different effects are probably due to different experimental conditions. This protein may also induce hemorrhage, hemolysis, and have antibacterial and antiparasitic activities. The protein is L-amino-acid oxidase of Bungarus fasciatus (Banded krait).